The following is a 221-amino-acid chain: Sugar transporter SWEET1 (221 aa).

A run of 7 helical transmembrane segments spans residues 3 to 23, 43 to 63, 68 to 88, 102 to 122, 129 to 149, 160 to 180, and 186 to 206; these read AGGVADSFLSSACVLFTLGMF, QFLPFLTTDVNNLSWLSYGVL, TLIIVNSVGAVLQTLYILAYL, ATLLAVLLLGYGYFWLLVPDL, LGLFCSVFTISMYLSPLADLA, LSFSLTIATLFCSASWSIYGF, and YITVPNLPGILTSLIRLGLFC. One can recognise a MtN3/slv 1 domain in the interval 10–94; the sequence is FLSSACVLFT…LAYLHYSPQK (85 aa). The MtN3/slv 2 domain occupies 127-212; sequence QQLGLFCSVF…GLFCKYPPEQ (86 aa). The interval 149–221 is mediates interaction with TRPV2; the sequence is AKIVQTKSTQ…QDRKYRLLQT (73 aa).

It belongs to the SWEET sugar transporter family. Interacts with TRPV2; the interaction probably occurs intracellularly and depends on TRPV2 N-glycosylation. Expressed at high levels in lung, placenta, spleen and thymus, at intermediate levels in brain, heart, kidney and testis, and at low levels in bone marrow, liver and lymph node. Within the thymus expression is highest in non-lymphoid cells.

The protein localises to the golgi apparatus membrane. It localises to the cell membrane. Mediates sugar transport across membranes. May regulate the expression of RAG1 a gene involved in V(D)J recombination. This is Sugar transporter SWEET1 (Slc50a1) from Mus musculus (Mouse).